A 126-amino-acid chain; its full sequence is Small ribosomal subunit protein uS11 (126 aa).

Belongs to the universal ribosomal protein uS11 family. In terms of assembly, part of the 30S ribosomal subunit.

Located on the platform of the 30S subunit. The protein is Small ribosomal subunit protein uS11 of Methanosarcina acetivorans (strain ATCC 35395 / DSM 2834 / JCM 12185 / C2A).